The following is a 546-amino-acid chain: Probable protein kinase UbiB (546 aa).

The Protein kinase domain maps to 123–501 (DFDETPLASA…SRRQGQARYL (379 aa)). ATP is bound by residues 129-137 (LASASIAQV) and Lys152. Asp287 acts as the Proton acceptor in catalysis. A run of 2 helical transmembrane segments spans residues 496–516 (GQAR…VFLL) and 521–541 (HIEW…LGWF).

This sequence belongs to the ABC1 family. UbiB subfamily.

The protein localises to the cell inner membrane. Its pathway is cofactor biosynthesis; ubiquinone biosynthesis [regulation]. In terms of biological role, is probably a protein kinase regulator of UbiI activity which is involved in aerobic coenzyme Q (ubiquinone) biosynthesis. The polypeptide is Probable protein kinase UbiB (Aeromonas salmonicida (strain A449)).